Consider the following 299-residue polypeptide: MLIIYRSNSLTAKEASIFCNKTLKERNIKSKRIESDFDNNQLENYFYNLAALPDLVIVLGGDGTVLKSANALVNYDIPILSFNIGGNLGFLTQEKDFLFDQSFIKILEKEEFIIDFRNRLHCDVYSNEKNRERKILKSYDALNDFYFKSVEEDISPTNQIQIEIDNEKVNEYKGDGLIISSSTGSTAYSMAAGGPIVHPSINAFVINPICPMSLASRPIIIPDTSKVVIRVVQKNKREIKLWKDGSKCMTIKENDYCEINKVTKPCKMIKFNKSISYYITLIKKLDWKGDLSLKNNQNN.

Aspartate 62 (proton acceptor) is an active-site residue. NAD(+)-binding positions include 62 to 63 (DG), lysine 67, 143 to 144 (ND), lysine 173, and aspartate 175.

The protein belongs to the NAD kinase family. Requires a divalent metal cation as cofactor.

Its subcellular location is the cytoplasm. It carries out the reaction NAD(+) + ATP = ADP + NADP(+) + H(+). Functionally, involved in the regulation of the intracellular balance of NAD and NADP, and is a key enzyme in the biosynthesis of NADP. Catalyzes specifically the phosphorylation on 2'-hydroxyl of the adenosine moiety of NAD to yield NADP. This is NAD kinase 1 from Prochlorococcus marinus subsp. pastoris (strain CCMP1986 / NIES-2087 / MED4).